Here is a 78-residue protein sequence, read N- to C-terminus: Large ribosomal subunit protein uL29 (78 aa).

The protein belongs to the universal ribosomal protein uL29 family.

This chain is Large ribosomal subunit protein uL29, found in Crocosphaera subtropica (strain ATCC 51142 / BH68) (Cyanothece sp. (strain ATCC 51142)).